The following is a 133-amino-acid chain: Fluoride-specific ion channel FluC (133 aa).

4 helical membrane passes run 4–24 (LLWIALGGSLGALCRYGLSVL), 35–55 (WGTLAANLVGCFLIGGLWVLA), 66–86 (VFIFTGGIGSLTTFSTYSLES), and 107–127 (VLGLVLVAIGAGCALFLLGGP). Residues G74 and T77 each coordinate Na(+).

Belongs to the fluoride channel Fluc/FEX (TC 1.A.43) family.

It is found in the cell inner membrane. The enzyme catalyses fluoride(in) = fluoride(out). Na(+) is not transported, but it plays an essential structural role and its presence is essential for fluoride channel function. Its function is as follows. Fluoride-specific ion channel. Important for reducing fluoride concentration in the cell, thus reducing its toxicity. The protein is Fluoride-specific ion channel FluC of Salinibacter ruber (strain DSM 13855 / M31).